Here is a 491-residue protein sequence, read N- to C-terminus: UDP-N-acetylmuramate--L-alanine ligase (491 aa).

An ATP-binding site is contributed by Gly-126–Thr-132.

The protein belongs to the MurCDEF family.

The protein resides in the cytoplasm. It carries out the reaction UDP-N-acetyl-alpha-D-muramate + L-alanine + ATP = UDP-N-acetyl-alpha-D-muramoyl-L-alanine + ADP + phosphate + H(+). It functions in the pathway cell wall biogenesis; peptidoglycan biosynthesis. Functionally, cell wall formation. The protein is UDP-N-acetylmuramate--L-alanine ligase of Salmonella gallinarum (strain 287/91 / NCTC 13346).